Reading from the N-terminus, the 427-residue chain is Peptidase B (427 aa).

Positions 195 and 200 each coordinate Mn(2+). Lys207 is a catalytic residue. The Mn(2+) site is built by Asp218, Asp277, and Glu279. Arg281 is an active-site residue.

It belongs to the peptidase M17 family. Homohexamer. Mn(2+) serves as cofactor.

It is found in the cytoplasm. The catalysed reaction is Release of an N-terminal amino acid, Xaa, from a peptide or arylamide. Xaa is preferably Glu or Asp but may be other amino acids, including Leu, Met, His, Cys and Gln.. Functionally, probably plays an important role in intracellular peptide degradation. In Escherichia coli (strain K12 / MC4100 / BW2952), this protein is Peptidase B.